Reading from the N-terminus, the 113-residue chain is MSVKIRKGDLVQVITGSKTGGKKGKQGRVLAVSGDRVWVEGVNLTTRHRKRVTNDKGTSSGGLEKRESPMHISNVALVDPETGAPTKVGFLVKTSGDKTVRVRFAKKSGKELT.

The tract at residues 48–70 (HRKRVTNDKGTSSGGLEKRESPM) is disordered.

It belongs to the universal ribosomal protein uL24 family. Part of the 50S ribosomal subunit.

Its function is as follows. One of two assembly initiator proteins, it binds directly to the 5'-end of the 23S rRNA, where it nucleates assembly of the 50S subunit. One of the proteins that surrounds the polypeptide exit tunnel on the outside of the subunit. The sequence is that of Large ribosomal subunit protein uL24 from Tropheryma whipplei (strain TW08/27) (Whipple's bacillus).